Consider the following 256-residue polypeptide: Large ribosomal subunit protein eL8y (256 aa).

Basic residues predominate over residues methionine 1–proline 15. The interval methionine 1–asparagine 20 is disordered.

The protein belongs to the eukaryotic ribosomal protein eL8 family.

The sequence is that of Large ribosomal subunit protein eL8y (RPL7AB) from Arabidopsis thaliana (Mouse-ear cress).